The primary structure comprises 345 residues: Methylthioribose-1-phosphate isomerase (345 aa).

Substrate-binding positions include 47-49, Arg-90, and Gln-197; that span reads RGA. The active-site Proton donor is Asp-238. 248 to 249 contributes to the substrate binding site; sequence NK.

This sequence belongs to the eIF-2B alpha/beta/delta subunits family. MtnA subfamily.

It carries out the reaction 5-(methylsulfanyl)-alpha-D-ribose 1-phosphate = 5-(methylsulfanyl)-D-ribulose 1-phosphate. The protein operates within amino-acid biosynthesis; L-methionine biosynthesis via salvage pathway; L-methionine from S-methyl-5-thio-alpha-D-ribose 1-phosphate: step 1/6. Its function is as follows. Catalyzes the interconversion of methylthioribose-1-phosphate (MTR-1-P) into methylthioribulose-1-phosphate (MTRu-1-P). This Thermoanaerobacter pseudethanolicus (strain ATCC 33223 / 39E) (Clostridium thermohydrosulfuricum) protein is Methylthioribose-1-phosphate isomerase.